We begin with the raw amino-acid sequence, 226 residues long: Probable transcriptional regulatory protein y4xI (226 aa).

The Response regulatory domain maps to M1 to L114. A DNA-binding region (ompR/PhoB-type) is located at residues C122 to L220.

The protein localises to the cytoplasm. The protein is Probable transcriptional regulatory protein y4xI of Sinorhizobium fredii (strain NBRC 101917 / NGR234).